Here is a 446-residue protein sequence, read N- to C-terminus: Light-independent protochlorophyllide reductase subunit N (446 aa).

The [4Fe-4S] cluster site is built by Cys22, Cys47, and Cys107.

Belongs to the BchN/ChlN family. As to quaternary structure, protochlorophyllide reductase is composed of three subunits; ChlL, ChlN and ChlB. Forms a heterotetramer of two ChlB and two ChlN subunits. It depends on [4Fe-4S] cluster as a cofactor.

Its subcellular location is the plastid. It localises to the chloroplast. It carries out the reaction chlorophyllide a + oxidized 2[4Fe-4S]-[ferredoxin] + 2 ADP + 2 phosphate = protochlorophyllide a + reduced 2[4Fe-4S]-[ferredoxin] + 2 ATP + 2 H2O. Its pathway is porphyrin-containing compound metabolism; chlorophyll biosynthesis (light-independent). Functionally, component of the dark-operative protochlorophyllide reductase (DPOR) that uses Mg-ATP and reduced ferredoxin to reduce ring D of protochlorophyllide (Pchlide) to form chlorophyllide a (Chlide). This reaction is light-independent. The NB-protein (ChlN-ChlB) is the catalytic component of the complex. This Mesostigma viride (Green alga) protein is Light-independent protochlorophyllide reductase subunit N.